We begin with the raw amino-acid sequence, 58 residues long: Large ribosomal subunit protein uL30 (58 aa).

The protein belongs to the universal ribosomal protein uL30 family. As to quaternary structure, part of the 50S ribosomal subunit.

The polypeptide is Large ribosomal subunit protein uL30 (Erythrobacter litoralis (strain HTCC2594)).